Consider the following 464-residue polypeptide: GTPase Der (464 aa).

EngA-type G domains lie at 3 to 166 and 178 to 351; these read PVIA…PEVE and IRIA…DSAF. Residues 9-16, 56-60, 118-121, 184-191, 231-235, and 296-299 each bind GTP; these read GRPNVGKS, DTGGL, NKTD, GRPNAGKS, DTAGV, and NKWD. One can recognise a KH-like domain in the interval 352 to 436; it reads IKVSTNHLTK…PIRLEFKTGE (85 aa).

It belongs to the TRAFAC class TrmE-Era-EngA-EngB-Septin-like GTPase superfamily. EngA (Der) GTPase family. Associates with the 50S ribosomal subunit.

Functionally, GTPase that plays an essential role in the late steps of ribosome biogenesis. This chain is GTPase Der, found in Thioalkalivibrio sulfidiphilus (strain HL-EbGR7).